The following is a 93-amino-acid chain: uncharacterized protein (93 aa).

This is an uncharacterized protein from Enterobacter agglomerans (Erwinia herbicola).